Here is a 262-residue protein sequence, read N- to C-terminus: Acyl-[acyl-carrier-protein]--UDP-N-acetylglucosamine O-acyltransferase (262 aa).

This sequence belongs to the transferase hexapeptide repeat family. LpxA subfamily. Homotrimer.

It is found in the cytoplasm. It catalyses the reaction a (3R)-hydroxyacyl-[ACP] + UDP-N-acetyl-alpha-D-glucosamine = a UDP-3-O-[(3R)-3-hydroxyacyl]-N-acetyl-alpha-D-glucosamine + holo-[ACP]. It participates in glycolipid biosynthesis; lipid IV(A) biosynthesis; lipid IV(A) from (3R)-3-hydroxytetradecanoyl-[acyl-carrier-protein] and UDP-N-acetyl-alpha-D-glucosamine: step 1/6. Functionally, involved in the biosynthesis of lipid A, a phosphorylated glycolipid that anchors the lipopolysaccharide to the outer membrane of the cell. The chain is Acyl-[acyl-carrier-protein]--UDP-N-acetylglucosamine O-acyltransferase from Wigglesworthia glossinidia brevipalpis.